A 201-amino-acid chain; its full sequence is 3-isopropylmalate dehydratase small subunit (201 aa).

It belongs to the LeuD family. LeuD type 1 subfamily. As to quaternary structure, heterodimer of LeuC and LeuD.

The enzyme catalyses (2R,3S)-3-isopropylmalate = (2S)-2-isopropylmalate. It participates in amino-acid biosynthesis; L-leucine biosynthesis; L-leucine from 3-methyl-2-oxobutanoate: step 2/4. Functionally, catalyzes the isomerization between 2-isopropylmalate and 3-isopropylmalate, via the formation of 2-isopropylmaleate. In Ruegeria pomeroyi (strain ATCC 700808 / DSM 15171 / DSS-3) (Silicibacter pomeroyi), this protein is 3-isopropylmalate dehydratase small subunit.